The chain runs to 158 residues: Probable deoxyuridine 5'-triphosphate nucleotidohydrolase (158 aa).

The protein belongs to the dUTPase family. Requires Mg(2+) as cofactor.

The enzyme catalyses dUTP + H2O = dUMP + diphosphate + H(+). The protein operates within pyrimidine metabolism; dUMP biosynthesis; dUMP from dCTP (dUTP route): step 1/2. This enzyme is involved in nucleotide metabolism: it produces dUMP, the immediate precursor of thymidine nucleotides and it decreases the intracellular concentration of dUTP so that uracil cannot be incorporated into DNA. It does probably not deaminate dCTP. The sequence is that of Probable deoxyuridine 5'-triphosphate nucleotidohydrolase from Sulfolobus islandicus rod-shaped virus 1 (SIRV-1).